The chain runs to 170 residues: Xanthine-guanine phosphoribosyltransferase (170 aa).

5-phospho-alpha-D-ribose 1-diphosphate is bound by residues 41–42 (RG) and 98–106 (DDLTDTGKT). D99 lines the Mg(2+) pocket. D102 contacts guanine. Xanthine is bound at residue D102. 102–106 (DTGKT) serves as a coordination point for GMP.

Belongs to the purine/pyrimidine phosphoribosyltransferase family. XGPT subfamily. In terms of assembly, homotetramer. Mg(2+) is required as a cofactor.

Its subcellular location is the cell inner membrane. The enzyme catalyses GMP + diphosphate = guanine + 5-phospho-alpha-D-ribose 1-diphosphate. It carries out the reaction XMP + diphosphate = xanthine + 5-phospho-alpha-D-ribose 1-diphosphate. The catalysed reaction is IMP + diphosphate = hypoxanthine + 5-phospho-alpha-D-ribose 1-diphosphate. The protein operates within purine metabolism; GMP biosynthesis via salvage pathway; GMP from guanine: step 1/1. It participates in purine metabolism; XMP biosynthesis via salvage pathway; XMP from xanthine: step 1/1. Purine salvage pathway enzyme that catalyzes the transfer of the ribosyl-5-phosphate group from 5-phospho-alpha-D-ribose 1-diphosphate (PRPP) to the N9 position of the 6-oxopurines guanine and xanthine to form the corresponding ribonucleotides GMP (guanosine 5'-monophosphate) and XMP (xanthosine 5'-monophosphate), with the release of PPi. To a lesser extent, also acts on hypoxanthine. This chain is Xanthine-guanine phosphoribosyltransferase, found in Brucella abortus (strain 2308).